Reading from the N-terminus, the 107-residue chain is Ig kappa chain V region 4135 (107 aa).

A framework-1 region spans residues 1–24; the sequence is ADIVMTQTPASVSEPVGGTVTIKC. The complementarity-determining-1 stretch occupies residues 25–35; sequence QTSQSIDDYLS. The tract at residues 36–50 is framework-2; it reads WYQQKPGQPPKGLIY. Residues 51–57 are complementarity-determining-2; that stretch reads RASTLAS. The segment at 58–89 is framework-3; that stretch reads GVPSRFRGSGSGTDFTLTISDLECADAATYYC. Residues 90 to 96 form a complementarity-determining-3 region; the sequence is QSTYGVG. Residues 97 to 106 are framework-4; sequence FGGGTEVVVK.

The sequence is that of Ig kappa chain V region 4135 from Oryctolagus cuniculus (Rabbit).